Consider the following 558-residue polypeptide: MSNDGRSRNRDRRYDEVPSDLPYQDTTIRTHPTLHDSERAVSADPLPPPPLPLQPPFGPDFYSSDTEEPAIAPDLKPVRRFVPDSWKNFFRGKKKDPEWDKPVSDIRYISDGVECSPPASPARPNHRSPLNSCKDPYGGSEGTFSSRKEADAVFPRDPYGSLDRHTQTVRTYSEKVEEYNLRYSYMKSWAGLLRILGVVELLLGAGVFACVTAYIHKDSEWYNLFGYSQPYGMGGVGGLGSMYGGYYYTGPKTPFVLVVAGLAWITTIIILVLGMSMYYRTILLDSNWWPLTEFGINVALFILYMAAAIVYVNDTNRGGLCYYPLFNTPVNAVFCRVEGGQIAAMIFLFVTMIVYLISALVCLKLWRHEAARRHREYMEQQEINEPSLSSKRKMCEMATSGDRQRDSEVNFKELRTAKMKPELLSGHIPPGHIPKPIVMPDYVAKYPVIQTDDERERYKAVFQDQFSEYKELSAEVQAVLRKFDELDAVMSRLPHHSESRQEHERISRIHEEFKKKKNDPTFLEKKERCDYLKNKLSHIKQRIQEYDKVMNWDVQGYS.

Residues Met-1–Glu-16 show a composition bias toward basic and acidic residues. Disordered regions lie at residues Met-1 to Gly-58 and Cys-115 to Ser-145. Topologically, residues Met-1–Arg-194 are cytoplasmic. Pro residues predominate over residues Pro-45–Gly-58. Residues Ser-116, Ser-120, and Ser-161 each carry the phosphoserine modification. Thr-166 carries the phosphothreonine modification. In terms of domain architecture, MARVEL spans Ser-188 to Arg-367. The helical transmembrane segment at Ile-195 to Ile-215 threads the bilayer. Residues His-216–Asn-223 are Extracellular-facing. A helical transmembrane segment spans residues Leu-224 to Gly-244. The Cytoplasmic portion of the chain corresponds to Gly-245–Pro-254. Residues Phe-255–Met-275 traverse the membrane as a helical segment. Over Ser-276–Leu-291 the chain is Extracellular. The chain crosses the membrane as a helical span at residues Thr-292 to Val-312. At Asn-313 to Gly-319 the chain is on the cytoplasmic side. The chain crosses the membrane as a helical span at residues Leu-320–Val-337. Residues Glu-338–Gln-341 lie on the Extracellular side of the membrane. The helical transmembrane segment at Ile-342–Cys-362 threads the bilayer. The Cytoplasmic portion of the chain corresponds to Leu-363–Ser-558. The residue at position 387 (Ser-387) is a Phosphoserine. Lys-412 is covalently cross-linked (Glycyl lysine isopeptide (Lys-Gly) (interchain with G-Cter in ubiquitin)). A coiled-coil region spans residues Met-439–Lys-548. An OCEL domain is found at Pro-440 to Asn-551.

It belongs to the ELL/occludin family. In terms of assembly, interacts with TJP1. Interacts with the ubiquitin ligase ITCH. Interacts (via C-terminal cytoplasmic domain) with LSR (via the cytoplasmic domain), ILDR1 and ILDR2; the interaction is required to recruit MARVELD2 to tricellular contacts. Ubiquitinated by ITCH; but this ubiquitination does not lead to proteasomal degradation. Polyubiquitinated at Lys-412 via 'Lys-63'-linked ubiquitin chains; deubiquitinated by USP53. Post-translationally, phosphorylated.

It localises to the cell membrane. The protein resides in the cell junction. Its subcellular location is the tight junction. Its function is as follows. Plays a role in the formation of tricellular tight junctions and of epithelial barriers. Required for normal hearing via its role in the separation of the endolymphatic and perilymphatic spaces of the organ of Corti in the inner ear, and for normal survival of hair cells in the organ of Corti. This Homo sapiens (Human) protein is MARVEL domain-containing protein 2.